The sequence spans 689 residues: Small ribosomal subunit protein mS39 (689 aa).

The N-terminal 37 residues, 1 to 37 (MAVVSAVRWLGLRSRLGQPLTGRRAGLCEQARSCRFY), are a transit peptide targeting the mitochondrion. At lysine 126 the chain carries N6-acetyllysine. PPR repeat units lie at residues 149 to 183 (IKDI…GTTV), 184 to 219 (SLET…EALE), 255 to 289 (NEHS…RLHA), 290 to 330 (DVYT…KVKP), 331 to 367 (NLQT…GIEP), 368 to 409 (SLAT…SPKD), 412 to 446 (DDKF…DNWK), 454 to 488 (RNFY…AYFP), 489 to 523 (HSQT…GHTF), and 572 to 606 (PATS…NKIP). The segment at 665–689 (NLTALTSDSDTDSSSDSDSDTSEGK) is disordered. Residues 673–689 (SDTDSSSDSDSDTSEGK) show a composition bias toward acidic residues.

It belongs to the mitochondrion-specific ribosomal protein mS39 family. Component of the mitochondrial small ribosomal subunit (mt-SSU). Mature mammalian 55S mitochondrial ribosomes consist of a small (28S) and a large (39S) subunit. The 28S small subunit contains a 12S ribosomal RNA (12S mt-rRNA) and 30 different proteins. The 39S large subunit contains a 16S rRNA (16S mt-rRNA), a copy of mitochondrial valine transfer RNA (mt-tRNA(Val)), which plays an integral structural role, and 52 different proteins. Associated with the 12S mitochondrial rRNA (12S mt-rRNA). Abundant in testes, skeletal muscle and heart tissue.

It is found in the mitochondrion. In terms of biological role, mitochondrial RNA-binding protein that has a role in mitochondrial translation. In Homo sapiens (Human), this protein is Small ribosomal subunit protein mS39 (PTCD3).